A 177-amino-acid polypeptide reads, in one-letter code: ATP synthase subunit b (177 aa).

Residues 19-39 (LFPNLPNFIAHVIATIVLVVI) form a helical membrane-spanning segment.

The protein belongs to the ATPase B chain family. As to quaternary structure, F-type ATPases have 2 components, F(1) - the catalytic core - and F(0) - the membrane proton channel. F(1) has five subunits: alpha(3), beta(3), gamma(1), delta(1), epsilon(1). F(0) has three main subunits: a(1), b(2) and c(10-14). The alpha and beta chains form an alternating ring which encloses part of the gamma chain. F(1) is attached to F(0) by a central stalk formed by the gamma and epsilon chains, while a peripheral stalk is formed by the delta and b chains.

It is found in the cell membrane. F(1)F(0) ATP synthase produces ATP from ADP in the presence of a proton or sodium gradient. F-type ATPases consist of two structural domains, F(1) containing the extramembraneous catalytic core and F(0) containing the membrane proton channel, linked together by a central stalk and a peripheral stalk. During catalysis, ATP synthesis in the catalytic domain of F(1) is coupled via a rotary mechanism of the central stalk subunits to proton translocation. In terms of biological role, component of the F(0) channel, it forms part of the peripheral stalk, linking F(1) to F(0). The polypeptide is ATP synthase subunit b (Mesoplasma florum (strain ATCC 33453 / NBRC 100688 / NCTC 11704 / L1) (Acholeplasma florum)).